Consider the following 176-residue polypeptide: Cytochrome b (176 aa).

3 helical membrane-spanning segments follow: residues 33–53, 77–98, and 113–133; these read FGSL…FLAM, WLLR…YLHI, and WNVG…GYVL. Residues H83 and H97 each coordinate heme b.

This sequence belongs to the cytochrome b family. As to quaternary structure, the cytochrome bc1 complex contains 11 subunits: 3 respiratory subunits (MT-CYB, CYC1 and UQCRFS1), 2 core proteins (UQCRC1 and UQCRC2) and 6 low-molecular weight proteins (UQCRH/QCR6, UQCRB/QCR7, UQCRQ/QCR8, UQCR10/QCR9, UQCR11/QCR10 and a cleavage product of UQCRFS1). This cytochrome bc1 complex then forms a dimer. Heme b is required as a cofactor.

The protein localises to the mitochondrion inner membrane. Functionally, component of the ubiquinol-cytochrome c reductase complex (complex III or cytochrome b-c1 complex) that is part of the mitochondrial respiratory chain. The b-c1 complex mediates electron transfer from ubiquinol to cytochrome c. Contributes to the generation of a proton gradient across the mitochondrial membrane that is then used for ATP synthesis. This is Cytochrome b (MT-CYB) from Eumops glaucinus (Wagner's mastiff bat).